The sequence spans 292 residues: Protein PHR1-LIKE 3 (292 aa).

Residues Thr-34–Gln-94 enclose the HTH myb-type domain. Positions Pro-65–Arg-90 form a DNA-binding region, H-T-H motif. Residues Thr-137–Gln-157 adopt a coiled-coil conformation. Positions Leu-150–Glu-155 match the LHEQLE motif.

Belongs to the MYB-CC family. In terms of assembly, homo- and heterodimers. Interacts with PHL2, but not with PHR1.

The protein localises to the nucleus. Transcriptional activator. Probable component of the central regulatory system controlling transcriptional responses to Pi starvation. Binds in a sequence-specific manner to phosphate starvation-regulated promoters. Required for female gametophyte development and function. The polypeptide is Protein PHR1-LIKE 3 (Arabidopsis thaliana (Mouse-ear cress)).